We begin with the raw amino-acid sequence, 626 residues long: MRTSVLRQAGLCRAALAARHLQISSKPSAALLSQVTRAIAVQSLPSASLPRFYSAEATAQSNTAASNGLVTRFADLAALGVHENVVRAITHGMGYENMTEVQSMTISPALKGKDIVAQAKTGTGKTLGFLVPVIQKIITQDPDLAHRFGGKRARSDDIRAIIISPTRELAEQIGEEARKLVKGTGIIVQTAVGGTQKNAMLYKTRQQGCHILVGTPGRLNDLLSDSHSGIDAPRLSTLVLDEADRMLEVGFNEELRQIINYLPDRKVLPRQTLLYSATIPKDVVGLARSYIDKNNFEFVQTVKADEVLTHDRIPQYIVPCKGFENIYPAMLELIEKALNESRTNPEALPFKAIVFLPTTAEVIMANAIFKRLQWKFKHIPKTWDIHSKLTQNARTRAADEFKNARTGILFSSDVTARGMDFPNVSHVIQTHIPPNREQYIHRLGRTGRANKPGQGWLIVPDIELHAARSRLPGLPIKRNDELECASVNAADSGADKHANFQHILDAASRLPEDLFKDCYSSYLGGALQGIDRQALVYALNDLAKFGWGLEEPPAVRQSIMKHMGRVQGLRVETREHSMRPMGSGPGHRRDFNSRGPRRQSDDPFENALHRAQDLDRRPTRRQQASF.

The short motif at 74–103 is the Q motif element; sequence ADLAALGVHENVVRAITHGMGYENMTEVQS. The 192-residue stretch at 106–297 folds into the Helicase ATP-binding domain; the sequence is ISPALKGKDI…RSYIDKNNFE (192 aa). Position 119-126 (119-126) interacts with ATP; the sequence is AKTGTGKT. Residues 241-244 carry the DEAD box motif; it reads DEAD. Residues 329-493 enclose the Helicase C-terminal domain; sequence AMLELIEKAL…CASVNAADSG (165 aa). The segment at 569–626 is disordered; that stretch reads LRVETREHSMRPMGSGPGHRRDFNSRGPRRQSDDPFENALHRAQDLDRRPTRRQQASF. The interval 578–626 is RNA-binding; it reads MRPMGSGPGHRRDFNSRGPRRQSDDPFENALHRAQDLDRRPTRRQQASF. The segment covering 607–617 has biased composition (basic and acidic residues); the sequence is ALHRAQDLDRR.

This sequence belongs to the DEAD box helicase family.

It is found in the mitochondrion matrix. The catalysed reaction is ATP + H2O = ADP + phosphate + H(+). Its activity is regulated as follows. Activated by exposed helices in a group I intron RNA. Functionally, acts as an RNA chaperone to resolve non-native structures formed during RNA folding to promote mitochondrial group I, but also group II, intron splicing. Functions predominantly by disrupting accessible RNA secondary structure and depends on spontaneous openings in tightly packed RNAs to gain access to RNA helices. The protein is ATP-dependent RNA helicase cyt-19, mitochondrial of Neurospora crassa (strain ATCC 24698 / 74-OR23-1A / CBS 708.71 / DSM 1257 / FGSC 987).